A 236-amino-acid chain; its full sequence is Eukaryotic translation initiation factor 3 subunit J (236 aa).

The interval 1-88 (MADDWESAAD…EAEAQRVASL (88 aa)) is disordered. Positions 28–46 (GEDEDEDIKDSWEDEEEKK) are enriched in acidic residues. Composition is skewed to basic and acidic residues over residues 47 to 58 (DEEKPTKTEAPA) and 68 to 77 (AKLEQQARLE).

This sequence belongs to the eIF-3 subunit J family. As to quaternary structure, component of the eukaryotic translation initiation factor 3 (eIF-3) complex. The eIF-3 complex interacts with pix.

The protein resides in the cytoplasm. Functionally, component of the eukaryotic translation initiation factor 3 (eIF-3) complex, which is involved in protein synthesis of a specialized repertoire of mRNAs and, together with other initiation factors, stimulates binding of mRNA and methionyl-tRNAi to the 40S ribosome. The eIF-3 complex specifically targets and initiates translation of a subset of mRNAs involved in cell proliferation. The polypeptide is Eukaryotic translation initiation factor 3 subunit J (Drosophila erecta (Fruit fly)).